A 301-amino-acid chain; its full sequence is Nucleotide-binding protein MAB_2783c (301 aa).

24–31 (GLSGAGRG) lines the ATP pocket. 75–78 (DVRS) is a binding site for GTP.

This sequence belongs to the RapZ-like family.

In terms of biological role, displays ATPase and GTPase activities. This Mycobacteroides abscessus (strain ATCC 19977 / DSM 44196 / CCUG 20993 / CIP 104536 / JCM 13569 / NCTC 13031 / TMC 1543 / L948) (Mycobacterium abscessus) protein is Nucleotide-binding protein MAB_2783c.